Reading from the N-terminus, the 664-residue chain is DNA ligase (664 aa).

NAD(+) contacts are provided by residues 32–36 and 80–81; these read DKEYD and SL. The active-site N6-AMP-lysine intermediate is the Lys122. 3 residues coordinate NAD(+): Arg144, Glu178, and Lys314. 4 residues coordinate Zn(2+): Cys407, Cys410, Cys423, and Cys429. In terms of domain architecture, BRCT spans 587–664; that stretch reads IDENPFMGKT…NEEEFSNKIK (78 aa).

This sequence belongs to the NAD-dependent DNA ligase family. LigA subfamily. It depends on Mg(2+) as a cofactor. Mn(2+) is required as a cofactor.

The enzyme catalyses NAD(+) + (deoxyribonucleotide)n-3'-hydroxyl + 5'-phospho-(deoxyribonucleotide)m = (deoxyribonucleotide)n+m + AMP + beta-nicotinamide D-nucleotide.. Its function is as follows. DNA ligase that catalyzes the formation of phosphodiester linkages between 5'-phosphoryl and 3'-hydroxyl groups in double-stranded DNA using NAD as a coenzyme and as the energy source for the reaction. It is essential for DNA replication and repair of damaged DNA. The sequence is that of DNA ligase from Clostridium botulinum (strain 657 / Type Ba4).